The sequence spans 225 residues: Protein LiaH (225 aa).

Coiled coils occupy residues 58-151 and 161-182; these read KKYE…KEHM and ESAY…IRAN.

The protein belongs to the PspA/Vipp/IM30 family.

The sequence is that of Protein LiaH (liaH) from Bacillus subtilis (strain 168).